The sequence spans 91 residues: Aspartyl/glutamyl-tRNA(Asn/Gln) amidotransferase subunit C (91 aa).

A disordered region spans residues 68 to 91 (LDQDDALANAPETEDGRFKGPNVS).

The protein belongs to the GatC family. As to quaternary structure, heterotrimer of A, B and C subunits.

It carries out the reaction L-glutamyl-tRNA(Gln) + L-glutamine + ATP + H2O = L-glutaminyl-tRNA(Gln) + L-glutamate + ADP + phosphate + H(+). The catalysed reaction is L-aspartyl-tRNA(Asn) + L-glutamine + ATP + H2O = L-asparaginyl-tRNA(Asn) + L-glutamate + ADP + phosphate + 2 H(+). In terms of biological role, allows the formation of correctly charged Asn-tRNA(Asn) or Gln-tRNA(Gln) through the transamidation of misacylated Asp-tRNA(Asn) or Glu-tRNA(Gln) in organisms which lack either or both of asparaginyl-tRNA or glutaminyl-tRNA synthetases. The reaction takes place in the presence of glutamine and ATP through an activated phospho-Asp-tRNA(Asn) or phospho-Glu-tRNA(Gln). In Halobacterium salinarum (strain ATCC 29341 / DSM 671 / R1), this protein is Aspartyl/glutamyl-tRNA(Asn/Gln) amidotransferase subunit C.